We begin with the raw amino-acid sequence, 335 residues long: MDIEKSDKWTYVKERKVGEGTYAVVFLGRQKETNRRVAIKKIKVGQFKDGIDISALREIKFLRESRHDNVIELVDVFSTKSNLNIILEFLDSDLEMLIKDKFIVFQPAHIKSWMVMLLRGLHHIHSRFILHRDLKPNNLLISSDGVLKLADFGLSRDFGTPSHMSHQVITRWYRPPELFMGCRSYGTGVDMWSVGCIFAELMLRTPYLPGESDLDQLNVIFRALGTPEPEVIKSMQQLPNYVEMKHIPPPNGGMEALFSAAGHEEIDLLKMMLDYNPYRRPTAQQALEHHYFSALPKPTHPSLLPRKGGEEGIKHVSSDLQRQNNFPMRANIKFV.

The Protein kinase domain maps to 11–292; that stretch reads YVKERKVGEG…AQQALEHHYF (282 aa). Residues 17–25 and Lys-40 contribute to the ATP site; that span reads VGEGTYAVV. Asp-133 acts as the Proton acceptor in catalysis. Phosphoserine is present on Ser-162. Ser-165 is modified (phosphoserine; by CAK). Phosphoserine is present on Ser-318.

Belongs to the protein kinase superfamily. CMGC Ser/Thr protein kinase family. CDC2/CDKX subfamily. One of the nine subunits forming the core-TFIIH basal transcription factor. Interacts with mcs2 and tfb3.

It is found in the cytoplasm. The protein localises to the nucleus. The enzyme catalyses [DNA-directed RNA polymerase] + ATP = phospho-[DNA-directed RNA polymerase] + ADP + H(+). Its function is as follows. Protein kinase essential for cell proliferation, where it is required for completion of cytokinesis. Phosphorylates the C-terminal repeat domain (CTD) of RNA polymerase II. This chain is Serine/threonine-protein kinase crk1 (crk1), found in Schizosaccharomyces pombe (strain 972 / ATCC 24843) (Fission yeast).